The primary structure comprises 138 residues: Ribonuclease VapC21 (138 aa).

Residues 6 to 128 (LLDKSAAYRA…ERIAAITRQP (123 aa)) form the PINc domain. Positions 8 and 97 each coordinate Mg(2+).

The protein belongs to the PINc/VapC protein family. Requires Mg(2+) as cofactor.

Its function is as follows. Toxic component of a type II toxin-antitoxin (TA) system. An RNase. Its toxic effect is neutralized by coexpression with cognate antitoxin VapB21. This Mycobacterium tuberculosis (strain CDC 1551 / Oshkosh) protein is Ribonuclease VapC21.